Here is an 802-residue protein sequence, read N- to C-terminus: MSEQSICQARAAVMVYDDANKKWVPAGGSTGFSRVHIYHHTGNNTFRVVGRKIQDHQVVINCAIPKGLKYNQATQTFHQWRDARQVYGLNFGSKEDANVFASAMMHALEVLNSQEAAQSKVTATQDSTNLRCIFCGPTLPRQNSQLPAQVQNGPSQEELEIQRRQLQEQQRQKELERERMERERLERERLERERLERERLEQEQLERQRQEREHVERLERERLERLERERQERERERLEQLEREQVEWERERRMSNAAPSSDSSLSSAPLPEYSSCQPPSAPPPSYAKVISAPVSDATPDYAVVTALPPTSTPPTPPLRHAATRFATSLGSAFHPVLPHYATVPRPLNKNSRPSSPVNTPSSQPPAAKSCAWPTSNFSPLPPSPPIMISSPPGKATGPRPVLPVCVSSPVPQMPPSPTAPNGSLDSVTYPVSPPPTSGPAAPPPPPPPPPPPPPPPLPPPPLPPLASLSHCGSQASPPPGTPLASTPSSKPSVLPSPSAGAPASAETPLNPELGDSSASEPGLQAASQPAESPTPQGLVLGPPAPPPPPPLPSGPAYASALPPPPGPPPPPPLPSTGPPPPPPPPPPLPNQAPPPPPPPPAPPLPASGIFSGSTSEDNRPLTGLAAAIAGAKLRKVSRVEDGSFPGGGNTGSVSLASSKADAGRGNGPLPLGGSGLMEEMSALLARRRRIAEKGSTIETEQKEDRNEDAEPITAKAPSTSTPEPTRKPWERTNTMNGSKSPVISRPKSTPSSQPSANGVQTEGLDYDRLKQDILDEMRKELAKLKEELIDAIRQELSKSNTA.

One can recognise a WH1 domain in the interval 1–111 (MSEQSICQAR…SAMMHALEVL (111 aa)). A compositionally biased stretch (polar residues) spans 143–155 (NSQLPAQVQNGPS). A disordered region spans residues 143 to 166 (NSQLPAQVQNGPSQEELEIQRRQL). At Ser-144 the chain carries Phosphoserine. The stretch at 154–258 (PSQEELEIQR…ERERRMSNAA (105 aa)) forms a coiled coil. Tandem repeats lie at residues 175-179 (LERER), 180-184 (MERER), 185-189 (LERER), 190-194 (LERER), 195-199 (LERER), 200-204 (LEQEQ), and 205-209 (LERQR). Residues 175 to 209 (LERERMERERLERERLERERLERERLEQEQLERQR) form a 7 X 5 AA tandem repeats of [LM]-E-[QR]-[EQ]-[QR] region. A compositionally biased stretch (basic and acidic residues) spans 245–254 (QVEWERERRM). 2 disordered regions span residues 245–287 (QVEW…PSYA) and 341–622 (ATVP…RPLT). Position 255 is a phosphoserine; by PKA (Ser-255). Low complexity predominate over residues 255 to 278 (SNAAPSSDSSLSSAPLPEYSSCQP). The span at 348-361 (NKNSRPSSPVNTPS) shows a compositional bias: polar residues. Ser-383 carries the post-translational modification Phosphoserine. Low complexity predominate over residues 386–410 (IMISSPPGKATGPRPVLPVCVSSPV). The span at 431 to 464 (VSPPPTSGPAAPPPPPPPPPPPPPPPLPPPPLPP) shows a compositional bias: pro residues. Low complexity predominate over residues 485 to 505 (STPSSKPSVLPSPSAGAPASA). A compositionally biased stretch (polar residues) spans 525-535 (AASQPAESPTP). Residues 542–553 (PPAPPPPPPLPS) are compositionally biased toward pro residues. Position 557 is a phosphotyrosine (Tyr-557). Residues 561-605 (LPPPPGPPPPPPLPSTGPPPPPPPPPPLPNQAPPPPPPPPAPPLP) show a composition bias toward pro residues. Positions 623–643 (GLAAAIAGAKLRKVSRVEDGS) are EVH2 block A. The segment at 623–799 (GLAAAIAGAK…DAIRQELSKS (177 aa)) is EVH2. The short motif at 632-635 (KLRK) is the KLKR element. 2 disordered regions span residues 639 to 675 (VEDGSFPGGGNTGSVSLASSKADAGRGNGPLPLGGSG) and 691 to 764 (AEKG…TEGL). Residues 664 to 675 (RGNGPLPLGGSG) show a composition bias toward gly residues. The EVH2 block B stretch occupies residues 674-691 (SGLMEEMSALLARRRRIA). Polar residues predominate over residues 731 to 760 (RTNTMNGSKSPVISRPKSTPSSQPSANGVQ). Phosphoserine occurs at positions 738 and 740. The interval 765–799 (DYDRLKQDILDEMRKELAKLKEELIDAIRQELSKS) is EVH2 block C. The stretch at 767 to 797 (DRLKQDILDEMRKELAKLKEELIDAIRQELS) forms a coiled coil.

It belongs to the Ena/VASP family. In terms of assembly, homotetramer. Interacts with APBB1IP, APBB1, PFN1 and ROBO4. Isoforms, containing the polyproline-rich regions with PPLP motifs, bind the WW domain of APBB1IP. Isoforms, containing the PPSY motif, bind, in vitro, to the WW2 and WW3 domains of NEDD4 and to the WW1 domain of YAP1. Binds the SH3 domain of BAIAP2-alpha but only after the autoinhibitory region of BAIAP2-alpha has been blocked by interaction with CDC42. Interacts, via the EVH1/WH1 domain, with the Pro-rich domains from VCL, ZYX and Listeria monocytogenes actA and with TES (via LIM domain). The TES LIM domain and the Pro-rich domains from VCL or ZYX compete for the same binding site. Interaction with ZYX is important for targeting ENAH to focal adhesions and enhances production of actin-rich structures at the apical surface of cells. Binds GPHN. Heterotrimer with TES and ACTL7A. Interacts with FAT1 (via EVH1 domains). Interacts, through the Pro-rich region, with the C-terminal SH3 domain of DNMPB. Interacts with PRPF40A. NTN1-induced PKA phosphorylation on Ser-255 directly parallels the formation of filopodial protrusions. Expressed in heart and testis, lower levels in lung, skeletal muscle, kidney, pancreas and brain. Isoform 5 is expressed exclusively in the brain. Isoform 2 is expressed predominantly in brain, testis, ovary and fat. In the brain, isoforms 2 and 5 are expressed at highest levels in the hippocampus, cortex and midbrain, and at lowest levels in the striatum and cerebellum. Isoform 6 is expressed in brain and spleen.

The protein localises to the cytoplasm. Its subcellular location is the cytoskeleton. It localises to the cell projection. It is found in the lamellipodium. The protein resides in the filopodium. The protein localises to the synapse. Its subcellular location is the cell junction. It localises to the focal adhesion. In terms of biological role, ena/VASP proteins are actin-associated proteins involved in a range of processes dependent on cytoskeleton remodeling and cell polarity such as axon guidance and lamellipodial and filopodial dynamics in migrating cells. ENAH induces the formation of F-actin rich outgrowths in fibroblasts. Acts synergistically with BAIAP2-alpha and downstream of NTN1 to promote filipodia formation. The polypeptide is Protein enabled homolog (Enah) (Mus musculus (Mouse)).